Reading from the N-terminus, the 266-residue chain is MSSVFGSVHILAMIAIQLLLTHSVSSLNLTNAYLHHKCSNTQGKYKQGSAFEKNLNLVLSTITSIGNFRDGFRYTEEGEDPNNVFVMFQCRGDSYWSKCPPCISTAVSGLRRRCPRNKGAIIWYDQCLLKISSVASFNKIDYENDFYLSNPNNMSDRGLFNKETSALLEKLAYKASDRNNLDGKQLVLYAAGEKRIGTKKVYAMVQCTKDLIFTKCFECLEGILRKFPQCCDGKRGGRVFGTSCNFRYELYPFLRNYSNSTMRAPY.

Positions 1–26 (MSSVFGSVHILAMIAIQLLLTHSVSS) are cleaved as a signal peptide. Gnk2-homologous domains are found at residues 33–136 (YLHH…SVAS) and 142–253 (YEND…LYPF).

The protein belongs to the cysteine-rich repeat secretory protein family.

It is found in the secreted. In Arabidopsis thaliana (Mouse-ear cress), this protein is Cysteine-rich repeat secretory protein 41 (CRRSP41).